A 400-amino-acid chain; its full sequence is Lysophospholipid transporter LplT (400 aa).

The next 12 membrane-spanning stretches (helical) occupy residues 19–39 (VIVA…ATLA), 53–73 (VLQM…GQIA), 91–111 (AGAA…LVGI), 139–159 (LMEA…GVLA), 164–184 (IAAL…NLFI), 195–213 (SWRL…VVLW), 227–247 (LFWG…PVAL), 257–277 (YLNA…AKLV), 281–301 (TVSR…IFSL), 304–324 (ALLP…FFVV), 352–372 (NSAM…GVPA), and 373–393 (VAIG…LWIW).

Belongs to the major facilitator superfamily. LplT (TC 2.A.1.42) family.

Its subcellular location is the cell inner membrane. Catalyzes the facilitated diffusion of 2-acyl-glycero-3-phosphoethanolamine (2-acyl-GPE) into the cell. The polypeptide is Lysophospholipid transporter LplT (Salmonella newport (strain SL254)).